The sequence spans 623 residues: Chaperone protein DnaK (623 aa).

T197 is modified (phosphothreonine; by autocatalysis). Residues 595–615 (AENMYKKDEPNTANDKKKKDD) show a composition bias toward basic and acidic residues. The segment at 595–623 (AENMYKKDEPNTANDKKKKDDDVIDAEVE) is disordered.

The protein belongs to the heat shock protein 70 family.

Acts as a chaperone. The protein is Chaperone protein DnaK of Campylobacter jejuni subsp. jejuni serotype O:6 (strain 81116 / NCTC 11828).